Here is a 356-residue protein sequence, read N- to C-terminus: Alanine racemase, catabolic (356 aa).

Residue Lys35 is the Proton acceptor; specific for D-alanine of the active site. Residue Lys35 is modified to N6-(pyridoxal phosphate)lysine. Arg130 contributes to the substrate binding site. The Proton acceptor; specific for L-alanine role is filled by Tyr253. Met301 provides a ligand contact to substrate.

This sequence belongs to the alanine racemase family. In terms of assembly, monomer. Requires pyridoxal 5'-phosphate as cofactor.

It carries out the reaction L-alanine = D-alanine. Its activity is regulated as follows. Inactivated by D- and L-beta-fluoroalanine, D- and L-beta-chloroalanine, and O-acetyl-D-serine. In terms of biological role, isomerizes L-alanine to D-alanine which is then oxidized to pyruvate by DadA. The sequence is that of Alanine racemase, catabolic (dadX) from Salmonella typhimurium (strain LT2 / SGSC1412 / ATCC 700720).